The primary structure comprises 360 residues: Phospho-N-acetylmuramoyl-pentapeptide-transferase (360 aa).

Transmembrane regions (helical) follow at residues 26 to 46 (SIMALLTAMAIGLWIGPKVIN), 73 to 93 (TMGGIMILVSIGVSSLLWADL), 98 to 118 (VWFTLFVLFGYGIVGFVDDYW), 132 to 152 (WKYFWLSFIAFIAAFSMYAMG), 168 to 188 (VMPQLGLFYIILAYFVIVGTS), 199 to 219 (GLAIVPTIMVTAAFALIAWAT), 236 to 256 (SGELAIMCTAIVGAGLGFLWY), 263 to 283 (VFMGDVGSLSLGGALGVIAVL), 288 to 308 (LLLLVMGGVFVVEALSVILQV), and 338 to 358 (VIVRFWIITLVLVLVGLVTLK).

The protein belongs to the glycosyltransferase 4 family. MraY subfamily. Mg(2+) serves as cofactor.

Its subcellular location is the cell inner membrane. The catalysed reaction is UDP-N-acetyl-alpha-D-muramoyl-L-alanyl-gamma-D-glutamyl-meso-2,6-diaminopimeloyl-D-alanyl-D-alanine + di-trans,octa-cis-undecaprenyl phosphate = di-trans,octa-cis-undecaprenyl diphospho-N-acetyl-alpha-D-muramoyl-L-alanyl-D-glutamyl-meso-2,6-diaminopimeloyl-D-alanyl-D-alanine + UMP. It participates in cell wall biogenesis; peptidoglycan biosynthesis. Functionally, catalyzes the initial step of the lipid cycle reactions in the biosynthesis of the cell wall peptidoglycan: transfers peptidoglycan precursor phospho-MurNAc-pentapeptide from UDP-MurNAc-pentapeptide onto the lipid carrier undecaprenyl phosphate, yielding undecaprenyl-pyrophosphoryl-MurNAc-pentapeptide, known as lipid I. This Haemophilus ducreyi (strain 35000HP / ATCC 700724) protein is Phospho-N-acetylmuramoyl-pentapeptide-transferase.